The sequence spans 164 residues: Phosphopantetheine adenylyltransferase (164 aa).

The protein belongs to the eukaryotic CoaD family.

The protein resides in the cytoplasm. The enzyme catalyses (R)-4'-phosphopantetheine + ATP + H(+) = 3'-dephospho-CoA + diphosphate. It functions in the pathway cofactor biosynthesis; coenzyme A biosynthesis. Reversibly transfers an adenylyl group from ATP to 4'-phosphopantetheine, yielding dephospho-CoA (dPCoA) and pyrophosphate. In Methanothermobacter thermautotrophicus (strain ATCC 29096 / DSM 1053 / JCM 10044 / NBRC 100330 / Delta H) (Methanobacterium thermoautotrophicum), this protein is Phosphopantetheine adenylyltransferase.